The primary structure comprises 1372 residues: DNA-directed RNA polymerase subunit beta (1372 aa).

It belongs to the RNA polymerase beta chain family. In terms of assembly, the RNAP catalytic core consists of 2 alpha, 1 beta, 1 beta' and 1 omega subunit. When a sigma factor is associated with the core the holoenzyme is formed, which can initiate transcription.

The enzyme catalyses RNA(n) + a ribonucleoside 5'-triphosphate = RNA(n+1) + diphosphate. In terms of biological role, DNA-dependent RNA polymerase catalyzes the transcription of DNA into RNA using the four ribonucleoside triphosphates as substrates. This is DNA-directed RNA polymerase subunit beta from Psychrobacter cryohalolentis (strain ATCC BAA-1226 / DSM 17306 / VKM B-2378 / K5).